A 235-amino-acid chain; its full sequence is uncharacterized protein (235 aa).

7 consecutive transmembrane segments (helical) span residues Val2–Leu22, Met34–Ala54, Leu56–Glu76, Phe102–Gly122, Met147–Ile167, Ile178–Leu198, and Met210–Trp230.

It is found in the cell membrane. This is an uncharacterized protein from Escherichia coli (strain K12).